The sequence spans 182 residues: Cytidylate kinase (182 aa).

7–15 (GLPGSGTTS) is a binding site for ATP.

This sequence belongs to the cytidylate kinase family. Type 2 subfamily.

The protein localises to the cytoplasm. It catalyses the reaction CMP + ATP = CDP + ADP. The catalysed reaction is dCMP + ATP = dCDP + ADP. The chain is Cytidylate kinase from Methanoregula boonei (strain DSM 21154 / JCM 14090 / 6A8).